The chain runs to 258 residues: Ribosomal RNA small subunit methyltransferase A (258 aa).

Positions 13, 15, 40, 61, 85, and 106 each coordinate S-adenosyl-L-methionine.

This sequence belongs to the class I-like SAM-binding methyltransferase superfamily. rRNA adenine N(6)-methyltransferase family. RsmA subfamily.

It is found in the cytoplasm. It catalyses the reaction adenosine(1518)/adenosine(1519) in 16S rRNA + 4 S-adenosyl-L-methionine = N(6)-dimethyladenosine(1518)/N(6)-dimethyladenosine(1519) in 16S rRNA + 4 S-adenosyl-L-homocysteine + 4 H(+). Its function is as follows. Specifically dimethylates two adjacent adenosines (A1518 and A1519) in the loop of a conserved hairpin near the 3'-end of 16S rRNA in the 30S particle. May play a critical role in biogenesis of 30S subunits. This Porphyromonas gingivalis (strain ATCC 33277 / DSM 20709 / CIP 103683 / JCM 12257 / NCTC 11834 / 2561) protein is Ribosomal RNA small subunit methyltransferase A.